The sequence spans 1369 residues: MGSLTRAEEEETAAAEEWSGEAVVYVNGVRRVLPDGLAHLTLLQYLRDIGLPGTKLGCGEGGCGACTVMVSCYDQTTKKTQHFAINACLAPLYSVEGMHIITVEGIGNRQRGLHPIQERLAMAHGSQCGFCTPGFVMSMYALLRSSEQPPTEEQIEDSLAGNLCRCTGYRPIIDAFRVFSKRDDLLYNNSSLKNADGRPICPSTGKPCSCGDQKDINGSESSLLTPTKSYSPCSYNEIDGNAYSEKELIFPPELQLRKVTSLKLNGFNGIRWYRPLKLKQVLHLKACYPNAKLIIGNSEVGVETKFKNAQYKVLISVTHVPELHTLKVKEDGIHIGSSVRLAQLQNFLRKVILERDSHEISSCEAILRQLKWFAGTQIRNVASVGGNICTASPISDLNPLWMATGATFEIIDVNNNIRTIPAKDFFLGYRKVDLKPDEILLSVILPWTRPFEFVKEFKQAHRREDDIALVNAGMRVYIRKVEGDWIISDVSIIYGGVAAVSHRASKTETFLTGKKWDYGLLDKTFDLLKEDVVLAENAPGGMVEFRSSLTLSFFFKFFLHVTHEMNIKGFWKDGLHATNLSAIQSFTRPVGVGTQCYELVRQGTAVGQPVVHTSAMLQVTGEAEYTDDTPTPPNTLHAALVLSTKAHARILSIDASLAKSSPGFAGLFLSKDVPGANHTGPVIHDEEVFASDVVTCVGQIVGLVVADTRDNAKAAANKVNIEYSELPAILSIEEAVKAGSFHPNSKRCLVKGNVEQCFLSGACDRIIEGKVQVGGQEHFYMEPQSTLVWPVDSGNEIHMISSTQAPQKHQKYVANVLGLPQSRVVCKTKRIGGGFGGKETRSAIFAAAASVAAYCLRQPVKLVLDRDIDMMTTGQRHSFLGKYKVGFTDDGKILALDLDVYNNGGHSHDLSLPVLERAMFHSDNVYDIPNVRVNGQVCFTNFPSNTAFRGFGGPQAMLIAENWIQHMATELKRSPEEIKELNFQSEGSVLHYGQLLQNCTIHSVWDELKVSCNFMEARKAVIDFNNNNRWRKRGIAMVPTKFGISFTTKFMNQAGALVQVYTDGTVLVTHGGVEMGQGLHTKVAQVAASSFNIPLSSIFISETSTDKVPNATPTAASASSDLYGAAVLDACQQIMARMEPVASRGNHKSFAELVLACYLERIDLSAHGFYITPDVGFDWVSGKGTPFYYFTYGAAFAEVEIDTLTGDFHTRTVDIVMDLGCSINPAIDIGQIEGGFIQGLGWAALEELKWGDDNHKWIRPGHLFTCGPGSYKIPSVNDIPLNFKVSLLKGVLNPKVIHSSKAVGEPPFFLGSAVLFAIKDAISAARAEEGHFDWFPLDSPATPERIRMACVDSITKKFASVYYRPKLSV.

Residues 20–106 enclose the 2Fe-2S ferredoxin-type domain; the sequence is GEAVVYVNGV…GMHIITVEGI (87 aa). [2Fe-2S] cluster contacts are provided by Cys-58, Cys-63, Cys-66, Cys-88, Cys-128, Cys-131, Cys-164, and Cys-166. The FAD-binding PCMH-type domain occupies 265–450; sequence NGFNGIRWYR…LSVILPWTRP (186 aa). FAD contacts are provided by residues 293 to 300, Phe-373, 383 to 387, Asp-396, Leu-440, and Lys-458; these read LIIGNSEV and SVGGN. The Mo-molybdopterin site is built by Gln-804 and Phe-835. Positions 839 and 917 each coordinate substrate. Arg-949 is a binding site for Mo-molybdopterin. Residues Phe-951 and Thr-1047 each contribute to the substrate site. Ala-1116 lines the Mo-molybdopterin pocket. Glu-1305 serves as the catalytic Proton acceptor.

This sequence belongs to the xanthine dehydrogenase family. In terms of assembly, homodimer. [2Fe-2S] cluster serves as cofactor. The cofactor is FAD. Mo-molybdopterin is required as a cofactor.

It catalyses the reaction xanthine + NAD(+) + H2O = urate + NADH + H(+). The enzyme catalyses hypoxanthine + NAD(+) + H2O = xanthine + NADH + H(+). Its function is as follows. Key enzyme involved in purine catabolism. Catalyzes the oxidation of hypoxanthine to xanthine and the oxidation of xanthine to urate. In Oryza sativa subsp. japonica (Rice), this protein is Xanthine dehydrogenase (XDH).